A 117-amino-acid polypeptide reads, in one-letter code: MGWSWIFLFLLSGTAGVHSEVQLQQSGPELVKPGASVKISCKASGYTFTDYNMHWVKQSHGKSLEWIGYIYPYNGGTGYNQKFKSKATLTVDNSSSTAYMELSSLTSEDSAVYYCAR.

A signal peptide spans 1–19; the sequence is MGWSWIFLFLLSGTAGVHS. The Ig-like domain occupies 20–117; it reads EVQLQQSGPE…EDSAVYYCAR (98 aa).

The polypeptide is Ig heavy chain V region 108A (Igh-VJ558) (Mus musculus (Mouse)).